The sequence spans 369 residues: Cobalt-precorrin-5B C(1)-methyltransferase (369 aa).

It belongs to the CbiD family.

It catalyses the reaction Co-precorrin-5B + S-adenosyl-L-methionine = Co-precorrin-6A + S-adenosyl-L-homocysteine. It functions in the pathway cofactor biosynthesis; adenosylcobalamin biosynthesis; cob(II)yrinate a,c-diamide from sirohydrochlorin (anaerobic route): step 6/10. In terms of biological role, catalyzes the methylation of C-1 in cobalt-precorrin-5B to form cobalt-precorrin-6A. The polypeptide is Cobalt-precorrin-5B C(1)-methyltransferase (Brucella melitensis biotype 2 (strain ATCC 23457)).